Consider the following 296-residue polypeptide: DNA repair protein complementing XP-A cells homolog (296 aa).

Polar residues predominate over residues 1–10 (MSAEVSTNES). Residues 1-39 (MSAEVSTNESAPPAEKKSKLTNAQKARIERNQAKAQKLR) are disordered. A compositionally biased stretch (basic and acidic residues) spans 26–39 (ARIERNQAKAQKLR). The Nuclear localization signal signature appears at 26-47 (ARIERNQAKAQKLREAKLVSHP). Positions 126, 129, 147, and 150 each coordinate Zn(2+). A zinc finger lies at 126–150 (CLECGDMFADSYLFNNFGHSVCDKC).

It belongs to the XPA family. As to expression, strongly expressed in the central nervous system and muscles.

The protein localises to the nucleus. In terms of biological role, involved in DNA excision repair. Initiates repair by binding to damaged sites with various affinities, depending on the photoproduct and the transcriptional state of the region. The protein is DNA repair protein complementing XP-A cells homolog (Xpac) of Drosophila melanogaster (Fruit fly).